Reading from the N-terminus, the 408-residue chain is Hepatocyte nuclear factor 4-gamma (408 aa).

The nuclear receptor DNA-binding region spans 9–84 (NCLCAICGDR…AGMKKEAVQN (76 aa)). 2 consecutive NR C4-type zinc fingers follow at residues 12 to 32 (CAIC…CDGC) and 48 to 72 (CRFS…LRKC). Ser-94 is modified (phosphoserine). Residues 99–328 (SNIPSINTLA…NLLQEMLLGG (230 aa)) enclose the NR LBD domain. The disordered stretch occupies residues 368 to 390 (ISTPETPLPSPPQGSGQEQYKIA). Residues Thr-370 and Thr-373 each carry the phosphothreonine modification. Residue Ser-377 is modified to Phosphoserine.

It belongs to the nuclear hormone receptor family. NR2 subfamily. Expressed in pancreas, kidney, small intestine and testis. Weakly expressed in colon. Not expressed in liver, skeletal muscle, lung, placenta, brain, heart, peripheral blood, ovary, prostate, thymus and spleen.

It is found in the nucleus. Its function is as follows. Transcription factor. Has a lower transcription activation potential than HNF4-alpha. This chain is Hepatocyte nuclear factor 4-gamma (HNF4G), found in Homo sapiens (Human).